Here is a 280-residue protein sequence, read N- to C-terminus: Shikimate dehydrogenase (NADP(+)) (280 aa).

Residues S19 to S21 and T66 each bind shikimate. The active-site Proton acceptor is the K70. An NADP(+)-binding site is contributed by E82. N91 and D106 together coordinate shikimate. NADP(+)-binding positions include G130–A134 and L222. Y224 serves as a coordination point for shikimate. NADP(+) is bound at residue G245.

Belongs to the shikimate dehydrogenase family. In terms of assembly, homodimer.

It catalyses the reaction shikimate + NADP(+) = 3-dehydroshikimate + NADPH + H(+). It participates in metabolic intermediate biosynthesis; chorismate biosynthesis; chorismate from D-erythrose 4-phosphate and phosphoenolpyruvate: step 4/7. In terms of biological role, involved in the biosynthesis of the chorismate, which leads to the biosynthesis of aromatic amino acids. Catalyzes the reversible NADPH linked reduction of 3-dehydroshikimate (DHSA) to yield shikimate (SA). This chain is Shikimate dehydrogenase (NADP(+)), found in Methanococcus maripaludis (strain C7 / ATCC BAA-1331).